The following is a 107-amino-acid chain: MPSPIQVTDFSFEKEVVNSEKLVLVDFWAPWCGPCRMISPVIDELAQEYVEQVKIVKINTDENPSISAEYGIRSIPTLMLFKDGKRVDTVIGAVPKSTLTNALKKYL.

A Thioredoxin domain is found at 2–107 (PSPIQVTDFS…TLTNALKKYL (106 aa)). Residues C32 and C35 each act as nucleophile in the active site. A disulfide bridge links C32 with C35.

The protein belongs to the thioredoxin family.

It localises to the plastid. The protein localises to the chloroplast. Participates in various redox reactions through the reversible oxidation of its active center dithiol to a disulfide and catalyzes dithiol-disulfide exchange reactions. In Cyanidium caldarium (Red alga), this protein is Thioredoxin (trxA).